Reading from the N-terminus, the 662-residue chain is MASNQPNNGEQDEQLAKQTSKLSMSAKAPTFTPKAAPFIPSFQRPGFVPVNNIAGGYPYAQYTGQGQNSNSPHPTKSYQQYYQKPTGNTVDEDKSRVPDFSKKKSFVPPKPAIPKGKVLSLGGNTSAPKSTKPISISLGGTKAPTTTKPAAPAAQSKTETPAPKVTSESTKKETAAPPPQETPTKSADAELAKTPSAPAAALKKAAEAAEPATVTEDATDLQNEVDQELLKDMYGKEHVNIVFIGHVDAGKSTLGGNILFLTGMVDKRTMEKIEREAKEAGKESWYLSWALDSTSEEREKGKTVEVGRAYFETEHRRFSLLDAPGHKGYVTNMINGASQADIGVLVISARRGEFEAGFERGGQTREHAVLARTQGINHLVVVINKMDEPSVQWSEERYKECVDKLSMFLRRVAGYNSKTDVKYMPVSAYTGQNVKDRVDSSVCPWYQGPSLLEYLDSMTHLERKVNAPFIMPIASKYKDLGTILEGKIEAGSIKKNSNVLVMPINQTLEVTAIYDEADEEISSSICGDQVRLRVRGDDSDVQTGYVLTSTKNPVHATTRFIAQIAILELPSILTTGYSCVMHIHTAVEEVSFAKLLHKLDKTNRKSKKPPMFATKGMKIIAELETQTPVCMERFEDYQYMGRFTLRDQGTTVAVGKVVKILD.

The tract at residues 1–220 (MASNQPNNGE…PATVTEDATD (220 aa)) is disordered. Over residues 26 to 40 (AKAPTFTPKAAPFIP) the composition is skewed to low complexity. The span at 62–89 (YTGQGQNSNSPHPTKSYQQYYQKPTGNT) shows a compositional bias: polar residues. Residues 91-102 (DEDKSRVPDFSK) are compositionally biased toward basic and acidic residues. Residues 122 to 134 (GGNTSAPKSTKPI) show a composition bias toward polar residues. The span at 141-158 (TKAPTTTKPAAPAAQSKT) shows a compositional bias: low complexity. The residue at position 182 (Thr-182) is a Phosphothreonine. Low complexity predominate over residues 192-213 (AKTPSAPAAALKKAAEAAEPAT). The tr-type G domain maps to 236–464 (KEHVNIVFIG…LDSMTHLERK (229 aa)). The tract at residues 245–252 (GHVDAGKS) is G1. GTP is bound at residue 245–252 (GHVDAGKS). Residues 301–305 (GKTVE) are G2. A G3 region spans residues 322–325 (DAPG). GTP contacts are provided by residues 384 to 387 (NKMD) and 428 to 429 (AY). The tract at residues 384-387 (NKMD) is G4. The interval 427–429 (SAY) is G5. A Phosphoserine modification is found at Ser-539.

Belongs to the TRAFAC class translation factor GTPase superfamily. Classic translation factor GTPase family. ERF3 subfamily. As to quaternary structure, component of the eRF1-eRF3-GTP ternary complex, composed of sup45/eRF1, sup35/eRF3 and GTP.

Its subcellular location is the cytoplasm. It carries out the reaction GTP + H2O = GDP + phosphate + H(+). Functionally, GTPase component of the eRF1-eRF3-GTP ternary complex, a ternary complex that mediates translation termination in response to the termination codons. Sup35/eRF3 mediates sup45/ERF1 delivery to stop codons: The eRF1-eRF3-GTP complex binds to a stop codon in the ribosomal A-site. GTP hydrolysis by sup35/eRF3 induces a conformational change that leads to its dissociation, permitting sup45/eRF1 to accommodate fully in the A-site. The chain is Eukaryotic peptide chain release factor GTP-binding subunit (sup35) from Schizosaccharomyces pombe (strain 972 / ATCC 24843) (Fission yeast).